The primary structure comprises 60 residues: Small ribosomal subunit protein bS21 (60 aa).

Residues 39 to 60 (ETPQEKRKRKAVARRRQRTRRR) are disordered. Basic residues predominate over residues 44 to 60 (KRKRKAVARRRQRTRRR).

It belongs to the bacterial ribosomal protein bS21 family.

The protein is Small ribosomal subunit protein bS21 of Microcystis aeruginosa (strain NIES-843 / IAM M-2473).